We begin with the raw amino-acid sequence, 309 residues long: 1,2-phenylacetyl-CoA epoxidase, subunit A (309 aa).

Substrate-binding positions include Arg33, Gln37, 103-106 (KYSS), Asn132, Met193, 202-204 (SPN), Lys214, and Asn218.

In terms of assembly, forms a stable heterotetramer (dimer of heterodimers) with PaaC. It depends on Fe cation as a cofactor.

The catalysed reaction is phenylacetyl-CoA + NADPH + O2 + H(+) = 2-(1,2-epoxy-1,2-dihydrophenyl)acetyl-CoA + NADP(+) + H2O. The protein operates within aromatic compound metabolism; phenylacetate degradation. Component of 1,2-phenylacetyl-CoA epoxidase multicomponent enzyme system which catalyzes the reduction of phenylacetyl-CoA (PA-CoA) to form 1,2-epoxyphenylacetyl-CoA. The subunit A is the catalytic subunit involved in the incorporation of one atom of molecular oxygen into phenylacetyl-CoA. The polypeptide is 1,2-phenylacetyl-CoA epoxidase, subunit A (paaA) (Escherichia coli (strain K12)).